Here is a 358-residue protein sequence, read N- to C-terminus: MYDRLQAVEDRYDELNELLSDPDVVSDPKRLRDLSKEQSGITATVETYREYKNVNEQINETKELLGEKLDDEMREMAKEEFAELQKEKADLEERLKLLLVPKDPNDDKNVILEIRGAAGGDEAALFAGDLFRMYSKYAESRGWKVEIMDANPTGIGGYKEIIAMMNGNDAFSRMKYENGAHRVQRVPETESGGRIHTSTATVAILPEAEEVEIELHDKDIRTDTFASTGAGGQSVNTTMSAVRLTHIPTGIVVSMQDERSQLKNKDKAMKVLRARVYDKFEREAREEYDANRKSAVGTGDRSERIRTYNYPQNRVTDHRIGLTIQKLDQIMEGKLDEIIDALILEDQTSKLEHLNDAN.

Position 233 is an N5-methylglutamine (Q233).

This sequence belongs to the prokaryotic/mitochondrial release factor family. Post-translationally, methylated by PrmC. Methylation increases the termination efficiency of RF1.

The protein localises to the cytoplasm. Peptide chain release factor 1 directs the termination of translation in response to the peptide chain termination codons UAG and UAA. The sequence is that of Peptide chain release factor 1 from Listeria monocytogenes serotype 4b (strain CLIP80459).